Here is a 271-residue protein sequence, read N- to C-terminus: NADH-quinone oxidoreductase subunit B (271 aa).

Cys37, Cys38, Cys103, and Cys132 together coordinate [4Fe-4S] cluster. The disordered stretch occupies residues 227–271 (LAPPSVFGRAKRIPVDPKPSDEARAHGPGPTTESIGDVDGPDRGI). The segment covering 239-251 (IPVDPKPSDEARA) has biased composition (basic and acidic residues).

The protein belongs to the complex I 20 kDa subunit family. In terms of assembly, NDH-1 is composed of 14 different subunits. Subunits NuoB, C, D, E, F, and G constitute the peripheral sector of the complex. Requires [4Fe-4S] cluster as cofactor.

It localises to the cell membrane. The enzyme catalyses a quinone + NADH + 5 H(+)(in) = a quinol + NAD(+) + 4 H(+)(out). Functionally, NDH-1 shuttles electrons from NADH, via FMN and iron-sulfur (Fe-S) centers, to quinones in the respiratory chain. The immediate electron acceptor for the enzyme in this species is believed to be a menaquinone. Couples the redox reaction to proton translocation (for every two electrons transferred, four hydrogen ions are translocated across the cytoplasmic membrane), and thus conserves the redox energy in a proton gradient. The chain is NADH-quinone oxidoreductase subunit B from Frankia casuarinae (strain DSM 45818 / CECT 9043 / HFP020203 / CcI3).